The sequence spans 443 residues: DNA double-strand break repair protein Mre11 (443 aa).

Mn(2+)-binding residues include Asp-8, His-10, Asp-49, and Asn-84. Residue His-85 is the Proton donor of the active site. Residues His-169, His-201, and His-203 each coordinate Mn(2+). Positions 382 to 429 (QEEGAEERVVEEETEKKVEEQFKGDEEADEAERRAEETEKAKSTKKAR) are disordered. Residues 395–423 (TEKKVEEQFKGDEEADEAERRAEETEKAK) are compositionally biased toward basic and acidic residues.

Belongs to the MRE11/RAD32 family. Homodimer. Forms a heterotetramer composed of two Mre11 subunits and two Rad50 subunits. Mn(2+) serves as cofactor.

Its activity is regulated as follows. Nuclease activity is regulated by Rad50. Its function is as follows. Part of the Rad50/Mre11 complex, which is involved in the early steps of DNA double-strand break (DSB) repair. The complex may facilitate opening of the processed DNA ends to aid in the recruitment of HerA and NurA. Mre11 binds to DSB ends and has both double-stranded 3'-5' exonuclease activity and single-stranded endonuclease activity. The polypeptide is DNA double-strand break repair protein Mre11 (Archaeoglobus fulgidus (strain ATCC 49558 / DSM 4304 / JCM 9628 / NBRC 100126 / VC-16)).